We begin with the raw amino-acid sequence, 432 residues long: Tubulin-specific chaperone cofactor E-like protein (432 aa).

LRR repeat units lie at residues 69–94 (ASHV…ILKN), 95–117 (LPHL…HELP), 118–140 (VSTL…QSFL), 143–167 (LPKV…EPIS), 168–191 (TTVR…NVVK), 193–217 (FPNV…HFEQ), and 218–242 (LPFW…QLNR). The segment at 254-295 (IPLLDALTNEERLHLIIGRLHHLRVLNGSKISSEQREQSERF) is LRRCT. The ubiquitin-like (UBL) stretch occupies residues 324-415 (VTIDLTPKKE…GDSFLVQEKI (92 aa)).

The protein localises to the cytoplasm. It localises to the cytoskeleton. Acts as a regulator of tubulin stability. Involved in microtubule-dependent neuronal function. May be involved in tubulin acetylation/deacetylation pathway. This is Tubulin-specific chaperone cofactor E-like protein from Caenorhabditis elegans.